A 58-amino-acid chain; its full sequence is Large ribosomal subunit protein bL32 (58 aa).

Belongs to the bacterial ribosomal protein bL32 family.

The chain is Large ribosomal subunit protein bL32 from Synechococcus sp. (strain WH7803).